We begin with the raw amino-acid sequence, 830 residues long: Leucine--tRNA ligase (830 aa).

The short motif at 48–58 (PYPSGAIHMGH) is the 'HIGH' region element. A 'KMSKS' region motif is present at residues 596-600 (KMSKS). Lys599 lines the ATP pocket.

It belongs to the class-I aminoacyl-tRNA synthetase family.

It localises to the cytoplasm. It carries out the reaction tRNA(Leu) + L-leucine + ATP = L-leucyl-tRNA(Leu) + AMP + diphosphate. In Helicobacter hepaticus (strain ATCC 51449 / 3B1), this protein is Leucine--tRNA ligase.